A 412-amino-acid polypeptide reads, in one-letter code: Tyrosine--tRNA ligase 1 (412 aa).

An L-tyrosine-binding site is contributed by Tyr-41. Residues 46-55 carry the 'HIGH' region motif; that stretch reads ATADSLHVGH. The L-tyrosine site is built by Tyr-174 and Gln-178. A 'KMSKS' region motif is present at residues 234–238; it reads KMGKS. Lys-237 serves as a coordination point for ATP. One can recognise an S4 RNA-binding domain in the interval 348-411; that stretch reads LSLTDLLLEH…KKQHLHLRLE (64 aa).

Belongs to the class-I aminoacyl-tRNA synthetase family. TyrS type 1 subfamily. As to quaternary structure, homodimer.

The protein resides in the cytoplasm. It carries out the reaction tRNA(Tyr) + L-tyrosine + ATP = L-tyrosyl-tRNA(Tyr) + AMP + diphosphate + H(+). Its function is as follows. Catalyzes the attachment of tyrosine to tRNA(Tyr) in a two-step reaction: tyrosine is first activated by ATP to form Tyr-AMP and then transferred to the acceptor end of tRNA(Tyr). The protein is Tyrosine--tRNA ligase 1 of Pseudomonas aeruginosa (strain ATCC 15692 / DSM 22644 / CIP 104116 / JCM 14847 / LMG 12228 / 1C / PRS 101 / PAO1).